A 250-amino-acid chain; its full sequence is Proteasome subunit alpha (250 aa).

The protein belongs to the peptidase T1A family. The 20S proteasome core is composed of 14 alpha and 14 beta subunits that assemble into four stacked heptameric rings, resulting in a barrel-shaped structure. The two inner rings, each composed of seven catalytic beta subunits, are sandwiched by two outer rings, each composed of seven alpha subunits. The catalytic chamber with the active sites is on the inside of the barrel. Has a gated structure, the ends of the cylinder being occluded by the N-termini of the alpha-subunits. Is capped at one or both ends by the proteasome regulatory ATPase, PAN.

It is found in the cytoplasm. The formation of the proteasomal ATPase PAN-20S proteasome complex, via the docking of the C-termini of PAN into the intersubunit pockets in the alpha-rings, triggers opening of the gate for substrate entry. Interconversion between the open-gate and close-gate conformations leads to a dynamic regulation of the 20S proteasome proteolysis activity. Component of the proteasome core, a large protease complex with broad specificity involved in protein degradation. This chain is Proteasome subunit alpha, found in Methanobrevibacter smithii (strain ATCC 35061 / DSM 861 / OCM 144 / PS).